A 118-amino-acid chain; its full sequence is Altered inheritance of mitochondria protein 26, mitochondrial (118 aa).

A run of 3 helical transmembrane segments spans residues 7 to 27 (EHLL…AYFF), 41 to 61 (LAVT…SIPA), and 98 to 118 (FLFC…GLSI).

The protein localises to the mitochondrion membrane. Its function is as follows. Involved in selective mitochondria autophagy (mitophagy). The polypeptide is Altered inheritance of mitochondria protein 26, mitochondrial (AIM26) (Saccharomyces cerevisiae (strain ATCC 204508 / S288c) (Baker's yeast)).